Consider the following 270-residue polypeptide: Secreted RxLR effector protein 149 (270 aa).

Residues 1 to 21 (MRNGVVLFGLFFIGYSSCVLA) form the signal peptide. The RxLR-dEER motif lies at 43–58 (RTLQADDPERILAEER).

It belongs to the RxLR effector family.

The protein localises to the secreted. Its subcellular location is the host nucleus. It is found in the host cytoplasm. Its function is as follows. Secreted effector that completely suppresses the host cell death induced by cell death-inducing proteins. The polypeptide is Secreted RxLR effector protein 149 (Plasmopara viticola (Downy mildew of grapevine)).